Reading from the N-terminus, the 499-residue chain is Putative antiporter subunit mnhD2 (499 aa).

Transmembrane regions (helical) follow at residues methionine 1–phenylalanine 21, isoleucine 31–valine 51, leucine 77–phenylalanine 97, phenylalanine 107–serine 127, leucine 129–leucine 149, isoleucine 160–leucine 180, isoleucine 208–leucine 228, leucine 239–phenylalanine 259, threonine 272–tyrosine 292, isoleucine 307–phenylalanine 327, leucine 329–methionine 349, phenylalanine 367–glycine 387, glycine 402–phenylalanine 422, and glycine 449–leucine 469.

Belongs to the CPA3 antiporters (TC 2.A.63) subunit D family. May form a heterooligomeric complex that consists of seven subunits: mnhA2, mnhB2, mnhC2, mnhD2, mnhE2, mnhF2 and mnhG2.

It localises to the cell membrane. This Staphylococcus epidermidis (strain ATCC 35984 / DSM 28319 / BCRC 17069 / CCUG 31568 / BM 3577 / RP62A) protein is Putative antiporter subunit mnhD2 (mnhD2).